Reading from the N-terminus, the 210-residue chain is Probable GTP-binding protein EngB (210 aa).

One can recognise an EngB-type G domain in the interval 27–201; that stretch reads MGIEVAFAGR…HQKLDIWFSQ (175 aa). Residues 35-42, 62-66, 80-83, 147-150, and 180-182 each bind GTP; these read GRSNAGKS, GRTQL, DLPG, TKAD, and FSV. Residues serine 42 and threonine 64 each coordinate Mg(2+).

It belongs to the TRAFAC class TrmE-Era-EngA-EngB-Septin-like GTPase superfamily. EngB GTPase family. The cofactor is Mg(2+).

Its function is as follows. Necessary for normal cell division and for the maintenance of normal septation. In Photorhabdus laumondii subsp. laumondii (strain DSM 15139 / CIP 105565 / TT01) (Photorhabdus luminescens subsp. laumondii), this protein is Probable GTP-binding protein EngB.